Consider the following 411-residue polypeptide: Imidazolonepropionase (411 aa).

The Fe(3+) site is built by histidine 78 and histidine 80. Residues histidine 78 and histidine 80 each contribute to the Zn(2+) site. 4-imidazolone-5-propanoate contacts are provided by arginine 87, tyrosine 150, and histidine 183. N-formimidoyl-L-glutamate is bound at residue tyrosine 150. Histidine 248 contributes to the Fe(3+) binding site. A Zn(2+)-binding site is contributed by histidine 248. Glutamine 251 provides a ligand contact to 4-imidazolone-5-propanoate. Fe(3+) is bound at residue aspartate 322. Position 322 (aspartate 322) interacts with Zn(2+). Residues asparagine 324 and glycine 326 each coordinate N-formimidoyl-L-glutamate. 4-imidazolone-5-propanoate is bound at residue threonine 327.

This sequence belongs to the metallo-dependent hydrolases superfamily. HutI family. Zn(2+) is required as a cofactor. Fe(3+) serves as cofactor.

It localises to the cytoplasm. It catalyses the reaction 4-imidazolone-5-propanoate + H2O = N-formimidoyl-L-glutamate. The protein operates within amino-acid degradation; L-histidine degradation into L-glutamate; N-formimidoyl-L-glutamate from L-histidine: step 3/3. In terms of biological role, catalyzes the hydrolytic cleavage of the carbon-nitrogen bond in imidazolone-5-propanoate to yield N-formimidoyl-L-glutamate. It is the third step in the universal histidine degradation pathway. The chain is Imidazolonepropionase from Flavobacterium psychrophilum (strain ATCC 49511 / DSM 21280 / CIP 103535 / JIP02/86).